The chain runs to 396 residues: NADH-quinone oxidoreductase subunit D 1 (396 aa).

Belongs to the complex I 49 kDa subunit family. As to quaternary structure, NDH-1 is composed of 14 different subunits. Subunits NuoB, C, D, E, F, and G constitute the peripheral sector of the complex.

The protein localises to the cell inner membrane. The enzyme catalyses a quinone + NADH + 5 H(+)(in) = a quinol + NAD(+) + 4 H(+)(out). Functionally, NDH-1 shuttles electrons from NADH, via FMN and iron-sulfur (Fe-S) centers, to quinones in the respiratory chain. The immediate electron acceptor for the enzyme in this species is believed to be ubiquinone. Couples the redox reaction to proton translocation (for every two electrons transferred, four hydrogen ions are translocated across the cytoplasmic membrane), and thus conserves the redox energy in a proton gradient. The chain is NADH-quinone oxidoreductase subunit D 1 from Rhizobium meliloti (strain 1021) (Ensifer meliloti).